We begin with the raw amino-acid sequence, 1313 residues long: Mitogen-activated protein kinase kinase kinase 15 (1313 aa).

The segment at 1–58 is disordered; that stretch reads MESGGGNAPAGALGAASESPQCPPPPGVEGAAGPAEPDGAAEGAAGGSGEGESGGGPR. A compositionally biased stretch (low complexity) spans 28–43; sequence VEGAAGPAEPDGAAEG. The span at 44–57 shows a compositional bias: gly residues; sequence AAGGSGEGESGGGP. The 257-residue stretch at 652–908 folds into the Protein kinase domain; the sequence is NGERVVLGKG…TAELLREGFL (257 aa). ATP is bound by residues 658–666 and K681; that span reads LGKGTYGIV. The active-site Proton acceptor is D773. The interval 939–958 is disordered; that stretch reads EPMATSSSEHGSVSPDSDAQ. Over residues 942 to 955 the composition is skewed to polar residues; it reads ATSSSEHGSVSPDS. The residue at position 994 (S994) is a Phosphoserine. Residues 1179–1225 are a coiled coil; it reads QLGELRQETNRLLEHLVEKEREYQNLLRQTLEQKTQELYHLQLKLKS.

This sequence belongs to the protein kinase superfamily. STE Ser/Thr protein kinase family. MAP kinase kinase kinase subfamily. Requires Mg(2+) as cofactor. As to expression, isoform 2 and isoform 3 are widely expressed. Isoform 2 highest levels are observed in fetal brain, and isoform 3 highest levels in pancreas, peripheral blood leukocytes, fetal brain and spleen.

It catalyses the reaction L-seryl-[protein] + ATP = O-phospho-L-seryl-[protein] + ADP + H(+). The catalysed reaction is L-threonyl-[protein] + ATP = O-phospho-L-threonyl-[protein] + ADP + H(+). With respect to regulation, contains an N-terminal autoinhibitory domain. Activated by phosphorylation at Thr-812, inhibited by phosphorylation at Ser-924 and Ser-994. Its function is as follows. Serine/threonine kinase which acts as a component of the MAP kinase signal transduction pathway. Once activated, acts as an upstream activator of the p38 MAPK signal transduction cascade through the phosphorylation and activation of several MAP kinase kinases. May function in a signal transduction pathway that is activated by various cell stresses and leads to apoptosis. Involved in phosphorylation of WNK4 in response to osmotic stress or hypotonic low-chloride stimulation via the p38 MAPK signal transduction cascade. The polypeptide is Mitogen-activated protein kinase kinase kinase 15 (MAP3K15) (Homo sapiens (Human)).